Consider the following 104-residue polypeptide: Protein RnfH (104 aa).

Belongs to the UPF0125 (RnfH) family.

This Pseudomonas syringae pv. syringae (strain B728a) protein is Protein RnfH.